A 419-amino-acid polypeptide reads, in one-letter code: uncharacterized protein (419 aa).

This is an uncharacterized protein from Schizosaccharomyces pombe (strain 972 / ATCC 24843) (Fission yeast).